The primary structure comprises 287 residues: Putative B3 domain-containing protein Os08g0157700 (287 aa).

Residues 17-29 (ATEEEEEEEEEEQ) show a composition bias toward acidic residues. The segment at 17 to 36 (ATEEEEEEEEEEQALGQEPA) is disordered. Residues 71–168 (FDKVVTPSDV…RYFIDYRHCH (98 aa)) constitute a DNA-binding region (TF-B3).

Its subcellular location is the nucleus. This Oryza sativa subsp. japonica (Rice) protein is Putative B3 domain-containing protein Os08g0157700.